The sequence spans 40 residues: Hemoglobin subunit alpha-2 (40 aa).

Positions 1–40 constitute a Globin domain; the sequence is VGPHLDDYGGEALHRNFEVYPQTKTYFPHFDASAGSNQLK.

Belongs to the globin family. As to quaternary structure, heterotetramer of two alpha chains and two beta chains. Red blood cells.

In terms of biological role, involved in oxygen transport from the lung to the various peripheral tissues. The sequence is that of Hemoglobin subunit alpha-2 from Saara hardwickii (Indian spiny-tailed lizard).